Reading from the N-terminus, the 744-residue chain is NAD(P)H-quinone oxidoreductase subunit 5, chloroplastic (744 aa).

16 helical membrane-spanning segments follow: residues 9-29 (WIMP…LLLF), 41-61 (AFPT…FFIL), 89-109 (VDPL…TVLI), 125-145 (FSYM…SNLI), 147-167 (IYIC…FWFT), 185-205 (GDFS…SFEF), 219-239 (NEIP…GALA), 258-278 (TPIS…FLVA), 280-300 (LLPL…IGII), 327-347 (LGYM…FHLI), 354-374 (ALLF…VGYS), 396-416 (TSFL…CFWS), 425-445 (WLYS…TAFY), 546-566 (LFPM…GIPF), 600-620 (FIPN…IASV), and 722-742 (LLLY…LYLF).

The protein belongs to the complex I subunit 5 family. In terms of assembly, NDH is composed of at least 16 different subunits, 5 of which are encoded in the nucleus.

The protein resides in the plastid. It localises to the chloroplast thylakoid membrane. It carries out the reaction a plastoquinone + NADH + (n+1) H(+)(in) = a plastoquinol + NAD(+) + n H(+)(out). The enzyme catalyses a plastoquinone + NADPH + (n+1) H(+)(in) = a plastoquinol + NADP(+) + n H(+)(out). In terms of biological role, NDH shuttles electrons from NAD(P)H:plastoquinone, via FMN and iron-sulfur (Fe-S) centers, to quinones in the photosynthetic chain and possibly in a chloroplast respiratory chain. The immediate electron acceptor for the enzyme in this species is believed to be plastoquinone. Couples the redox reaction to proton translocation, and thus conserves the redox energy in a proton gradient. This chain is NAD(P)H-quinone oxidoreductase subunit 5, chloroplastic (ndhF), found in Pelargonium hortorum (Common geranium).